An 86-amino-acid polypeptide reads, in one-letter code: Co-chaperonin GroES (86 aa).

It belongs to the GroES chaperonin family. Heptamer of 7 subunits arranged in a ring. Interacts with the chaperonin GroEL.

Its subcellular location is the cytoplasm. Together with the chaperonin GroEL, plays an essential role in assisting protein folding. The GroEL-GroES system forms a nano-cage that allows encapsulation of the non-native substrate proteins and provides a physical environment optimized to promote and accelerate protein folding. GroES binds to the apical surface of the GroEL ring, thereby capping the opening of the GroEL channel. This chain is Co-chaperonin GroES, found in Campylobacter lari (strain RM2100 / D67 / ATCC BAA-1060).